A 294-amino-acid chain; its full sequence is Nucleotide-binding protein LVIS_0651 (294 aa).

12-19 is an ATP binding site; it reads GMSGAGKT. 62–65 is a GTP binding site; that stretch reads DLRS.

This sequence belongs to the RapZ-like family.

Functionally, displays ATPase and GTPase activities. In Levilactobacillus brevis (strain ATCC 367 / BCRC 12310 / CIP 105137 / JCM 1170 / LMG 11437 / NCIMB 947 / NCTC 947) (Lactobacillus brevis), this protein is Nucleotide-binding protein LVIS_0651.